The chain runs to 493 residues: Cobyric acid synthase (493 aa).

The GATase cobBQ-type domain occupies 246-440; it reads PIDIAVIKMP…IHGVFDGVAF (195 aa). Cys326 functions as the Nucleophile in the catalytic mechanism. His432 is an active-site residue.

This sequence belongs to the CobB/CobQ family. CobQ subfamily.

Its pathway is cofactor biosynthesis; adenosylcobalamin biosynthesis. Functionally, catalyzes amidations at positions B, D, E, and G on adenosylcobyrinic A,C-diamide. NH(2) groups are provided by glutamine, and one molecule of ATP is hydrogenolyzed for each amidation. The protein is Cobyric acid synthase of Clostridium botulinum (strain Loch Maree / Type A3).